A 782-amino-acid polypeptide reads, in one-letter code: Semaphorin-3G (782 aa).

The N-terminal stretch at 1–22 is a signal peptide; the sequence is MAPSAWAICWLLGGLLLHGGSS. The region spanning 32–519 is the Sema domain; sequence RLRLSYRDLL…SRLGVAQLRL (488 aa). Asparagine 44 carries an N-linked (GlcNAc...) asparagine glycan. Cysteine 105 and cysteine 116 are oxidised to a cystine. Asparagine 127 carries an N-linked (GlcNAc...) asparagine glycan. 5 cysteine pairs are disulfide-bonded: cysteine 134/cysteine 143, cysteine 270/cysteine 382, cysteine 294/cysteine 342, cysteine 522/cysteine 540, and cysteine 603/cysteine 655. The region spanning 569–671 is the Ig-like C2-type domain; that stretch reads PALQCLGQSQ…FSQTVVRLAL (103 aa).

Belongs to the semaphorin family.

It localises to the secreted. Has chemorepulsive activities for sympathetic axons. Ligand of NRP2. This Homo sapiens (Human) protein is Semaphorin-3G (SEMA3G).